Here is a 479-residue protein sequence, read N- to C-terminus: Protein nucleotidyltransferase YdiU (479 aa).

Residues Gly83, Gly85, Arg86, Lys106, Asp118, Gly119, Arg169, and Arg176 each contribute to the ATP site. The Proton acceptor role is filled by Asp245. Mg(2+)-binding residues include Asn246 and Asp255. ATP is bound at residue Asp255.

This sequence belongs to the SELO family. It depends on Mg(2+) as a cofactor. The cofactor is Mn(2+).

The catalysed reaction is L-seryl-[protein] + ATP = 3-O-(5'-adenylyl)-L-seryl-[protein] + diphosphate. It carries out the reaction L-threonyl-[protein] + ATP = 3-O-(5'-adenylyl)-L-threonyl-[protein] + diphosphate. It catalyses the reaction L-tyrosyl-[protein] + ATP = O-(5'-adenylyl)-L-tyrosyl-[protein] + diphosphate. The enzyme catalyses L-histidyl-[protein] + UTP = N(tele)-(5'-uridylyl)-L-histidyl-[protein] + diphosphate. The catalysed reaction is L-seryl-[protein] + UTP = O-(5'-uridylyl)-L-seryl-[protein] + diphosphate. It carries out the reaction L-tyrosyl-[protein] + UTP = O-(5'-uridylyl)-L-tyrosyl-[protein] + diphosphate. In terms of biological role, nucleotidyltransferase involved in the post-translational modification of proteins. It can catalyze the addition of adenosine monophosphate (AMP) or uridine monophosphate (UMP) to a protein, resulting in modifications known as AMPylation and UMPylation. This Erwinia tasmaniensis (strain DSM 17950 / CFBP 7177 / CIP 109463 / NCPPB 4357 / Et1/99) protein is Protein nucleotidyltransferase YdiU.